A 329-amino-acid chain; its full sequence is Serpentine receptor class alpha-2 (329 aa).

Transmembrane regions (helical) follow at residues 25–45 (FVYLLAIILTFITTYFAVKIL), 57–77 (ILLVQNLFYANLYQFFHGIEA), 104–124 (YYKIILMGSSGMVYGQTGLLI), 144–164 (CAVISILVLICSSSTGRLIVW), 188–208 (HYFTMCAVLSTINFCISTFIL), 240–260 (FLTVSQFVAVFLNSFGMIVLV), and 273–293 (LLVVWLYAFPIVVLMFPVILV).

The protein belongs to the nematode receptor-like protein sra family.

It is found in the membrane. This Caenorhabditis elegans protein is Serpentine receptor class alpha-2 (sra-2).